The chain runs to 371 residues: MEESMKQASVMENLRSVVFKESESLEGTCAKIRGYDFNNGIDYSQILKSMVSTGFQASNLGDAIETVNQMLDWRLSHEQVTEDCSQEEKNPTYRESIKCKIFLGFTSNLISSGVRDIIRYLVQHHMVDVIVTTTGGIEEDLIKCLADTFKGEFSLPGAELRSKGLNRIGNLLVPNDNYCKFEDWIIPIFDQMLEEQKAKNVLWTPSKLIMRLGKEINNESSYLYWAYKNDIPVFCPGLTDGSLGDMLYFHTFRNPGLIVDVVQDIRAINSEAVHANPRKTGMIILGGGLPKHHICNANMMRNGADYAVFINTAQEFDGSDSGARPDEAVSWGKIRGSAKSVKVHCDATIAFPLLVAETFAAKREQSAEPSS.

NAD(+) contacts are provided by residues 107–111 (SNLIS), 133–135 (TTG), E139, and D240. Position 138-139 (138-139 (EE)) interacts with spermidine. D245 provides a ligand contact to spermidine. NAD(+) is bound at residue G287. H292 contributes to the spermidine binding site. Residue 312 to 313 (TA) participates in NAD(+) binding. Residues 318–320 (GSD) and 327–333 (EAVSWGK) each bind spermidine. K333 serves as the catalytic Nucleophile. 346-347 (DA) lines the NAD(+) pocket.

This sequence belongs to the deoxyhypusine synthase family. NAD(+) serves as cofactor. In terms of tissue distribution, expressed in shoot tips.

The catalysed reaction is [eIF5A protein]-L-lysine + spermidine = [eIF5A protein]-deoxyhypusine + propane-1,3-diamine. Its pathway is protein modification; eIF5A hypusination. In terms of biological role, catalyzes the NAD-dependent oxidative cleavage of spermidine and the subsequent transfer of the butylamine moiety of spermidine to the epsilon-amino group of a specific lysine residue of the eIF-5A precursor protein to form the intermediate deoxyhypusine residue. Also able to produce homospermidine from putrescine. The sequence is that of Deoxyhypusine synthase (DHS1) from Senecio vernalis (Spring groundsel).